A 375-amino-acid chain; its full sequence is UDP-N-acetylglucosamine--N-acetylmuramyl-(pentapeptide) pyrophosphoryl-undecaprenol N-acetylglucosamine transferase (375 aa).

Residues 13–15, Asn124, Arg165, Ser193, and Gln294 each bind UDP-N-acetyl-alpha-D-glucosamine; that span reads TGG.

This sequence belongs to the glycosyltransferase 28 family. MurG subfamily.

It is found in the cell inner membrane. It carries out the reaction di-trans,octa-cis-undecaprenyl diphospho-N-acetyl-alpha-D-muramoyl-L-alanyl-D-glutamyl-meso-2,6-diaminopimeloyl-D-alanyl-D-alanine + UDP-N-acetyl-alpha-D-glucosamine = di-trans,octa-cis-undecaprenyl diphospho-[N-acetyl-alpha-D-glucosaminyl-(1-&gt;4)]-N-acetyl-alpha-D-muramoyl-L-alanyl-D-glutamyl-meso-2,6-diaminopimeloyl-D-alanyl-D-alanine + UDP + H(+). The protein operates within cell wall biogenesis; peptidoglycan biosynthesis. Its function is as follows. Cell wall formation. Catalyzes the transfer of a GlcNAc subunit on undecaprenyl-pyrophosphoryl-MurNAc-pentapeptide (lipid intermediate I) to form undecaprenyl-pyrophosphoryl-MurNAc-(pentapeptide)GlcNAc (lipid intermediate II). This Brucella anthropi (strain ATCC 49188 / DSM 6882 / CCUG 24695 / JCM 21032 / LMG 3331 / NBRC 15819 / NCTC 12168 / Alc 37) (Ochrobactrum anthropi) protein is UDP-N-acetylglucosamine--N-acetylmuramyl-(pentapeptide) pyrophosphoryl-undecaprenol N-acetylglucosamine transferase.